The sequence spans 384 residues: Stress response protein bis1 (384 aa).

Disordered stretches follow at residues 1–22 (MSLA…NKEQ) and 344–384 (SPLH…PKRV).

It belongs to the ESS2 family. Heterodimer with ish1.

The protein localises to the nucleus. Its subcellular location is the cytoplasm. The protein resides in the cytoskeleton. It localises to the spindle. Has a role in maintaining cell viability during stationary phase induced by stress response. May be involved in pre-mRNA splicing. This chain is Stress response protein bis1 (bis1), found in Schizosaccharomyces pombe (strain 972 / ATCC 24843) (Fission yeast).